We begin with the raw amino-acid sequence, 389 residues long: tRNA (cytosine(72)-C(5))-methyltransferase (389 aa).

A PUA domain is found at 92–167 (LPVVVANKYA…LAVEVTLPKF (76 aa)). Residues 209-215 (AAAPGGK), D233, R238, D260, D277, and Y304 each bind S-adenosyl-L-methionine. Catalysis depends on C327, which acts as the Nucleophile.

Belongs to the class I-like SAM-binding methyltransferase superfamily. RsmB/NOP family.

The enzyme catalyses cytidine(72) in tRNA + S-adenosyl-L-methionine = 5-methylcytidine(72) in tRNA + S-adenosyl-L-homocysteine + H(+). The catalysed reaction is cytidine(72) in tRNA(Thr) + S-adenosyl-L-methionine = 5-methylcytidine(72) in tRNA(Thr) + S-adenosyl-L-homocysteine + H(+). It catalyses the reaction cytidine(72) in tRNA(Cys) + S-adenosyl-L-methionine = 5-methylcytidine(72) in tRNA(Cys) + S-adenosyl-L-homocysteine + H(+). Its function is as follows. S-adenosyl-L-methionine-dependent methyltransferase that specifically methylates the C5 position of cytosine 72 in several tRNAs. This modification appears to slightly promote the thermal stability of P.horikoshii tRNAs, but does not affect their amino acid accepting activity. Four elements in the acceptor stems of tRNAs are essential for substrate recognition by this enzyme: the target site C72, the 3'-CCA terminus, U73 or G73, and the second base pair C2:G71. The polypeptide is tRNA (cytosine(72)-C(5))-methyltransferase (Pyrococcus horikoshii (strain ATCC 700860 / DSM 12428 / JCM 9974 / NBRC 100139 / OT-3)).